The sequence spans 405 residues: Phosphoglycerate kinase (405 aa).

Residues Asp-24–Asn-26, Arg-40, His-63–Arg-66, Arg-122, and Arg-162 each bind substrate. ATP is bound by residues Lys-212, Glu-331, and Gly-361 to Ser-364.

It belongs to the phosphoglycerate kinase family. In terms of assembly, monomer.

The protein resides in the cytoplasm. It carries out the reaction (2R)-3-phosphoglycerate + ATP = (2R)-3-phospho-glyceroyl phosphate + ADP. It functions in the pathway carbohydrate degradation; glycolysis; pyruvate from D-glyceraldehyde 3-phosphate: step 2/5. This Corynebacterium glutamicum (strain ATCC 13032 / DSM 20300 / JCM 1318 / BCRC 11384 / CCUG 27702 / LMG 3730 / NBRC 12168 / NCIMB 10025 / NRRL B-2784 / 534) protein is Phosphoglycerate kinase (pgk).